The chain runs to 493 residues: 3-ketoacyl-CoA synthase 16 (493 aa).

The signal sequence occupies residues 1–35; sequence MDYPMKKVKIFFNYLMAHRFKLCFLPLMVAIAVEA. The chain crosses the membrane as a helical span at residues 52–74; sequence NNHTSLTMFFLYLALGSTLYLMT. The FAE domain maps to 71–366; sequence YLMTRPKPVY…FFVRFVKKKF (296 aa). Residues C221, H300, H384, H388, H417, and N421 contribute to the active site.

It belongs to the thiolase-like superfamily. Chalcone/stilbene synthases family. In terms of tissue distribution, expressed in siliques.

Its subcellular location is the membrane. It catalyses the reaction a very-long-chain acyl-CoA + malonyl-CoA + H(+) = a very-long-chain 3-oxoacyl-CoA + CO2 + CoA. Its pathway is lipid metabolism; fatty acid biosynthesis. The protein is 3-ketoacyl-CoA synthase 16 of Arabidopsis thaliana (Mouse-ear cress).